The primary structure comprises 833 residues: Leucine--tRNA ligase (833 aa).

Residues P41–H52 carry the 'HIGH' region motif. Positions K610–S614 match the 'KMSKS' region motif. Residue K613 coordinates ATP.

This sequence belongs to the class-I aminoacyl-tRNA synthetase family.

Its subcellular location is the cytoplasm. It catalyses the reaction tRNA(Leu) + L-leucine + ATP = L-leucyl-tRNA(Leu) + AMP + diphosphate. The sequence is that of Leucine--tRNA ligase from Streptococcus pneumoniae serotype 2 (strain D39 / NCTC 7466).